The chain runs to 452 residues: Transcription factor AP-2-delta (452 aa).

The residue at position 239 (S239) is a Phosphoserine; by PKA. An H-S-H (helix-span-helix), dimerization region spans residues 280–410 (RRKAANVTLL…VLSEMLNYLE (131 aa)). Residues 416 to 452 (KNGGAADSGQGHANSEKAPLRKTSEAAVKEGKTEKTD) are disordered. Basic and acidic residues predominate over residues 429 to 452 (NSEKAPLRKTSEAAVKEGKTEKTD).

It belongs to the AP-2 family. Binds DNA as a dimer. Can form homodimers or heterodimers with other AP-2 family members. Highly expressed in brain, placenta, skeletal muscle, thymus, small intestine, and prostate, and expressed at lower levels in leukocyte, spleen, testis, ovary and colon. Barely detectable in heart, kidney, liver, lung or pancreas.

Its subcellular location is the nucleus. Functionally, sequence-specific DNA-binding protein that interacts with inducible viral and cellular enhancer elements to regulate transcription of selected genes. AP-2 factors bind to the consensus sequence 5'-GCCNNNGGC-3' and activate genes involved in a large spectrum of important biological functions including proper eye, face, body wall, limb and neural tube development. They also suppress a number of genes including MCAM/MUC18, C/EBP alpha and MYC. The protein is Transcription factor AP-2-delta of Homo sapiens (Human).